The primary structure comprises 389 residues: MEMKDFIFTSESVSEGHPDKVADQVSDAILDAILTQDPKSRVACETMVTTGMAVIAGEITTNAIIDYPKIVRETIREIGYNDSAMGFDWETCAVLTSIDKQSPDIAQGVTEGEGMFKEQGAGDQGLMFGFACNETPELMPMSILLAHKLVSRLADVRKAGVLDFLRPDSKSQVSIQYIDDKPVHVDTVVISSQHSPEVSYEMIKEGIIEEVVKKIIPANLMDSKTKFLINPTGRFVIGGPMGDCGLTGRKIIVDSYGGHGAHGGGAFSGKDPSKVDRSAAYMGRYVAKNLVASGVCERCEVQVAYAIGVAEPVSVMVDCNGTGKIPSKRISEIVREVFDMRPRAIIEQLDLLRPIYRKTAAYGHFGRELPEFTWERTDKAAIIREKAGL.

Residue histidine 17 coordinates ATP. Residue aspartate 19 coordinates Mg(2+). Glutamate 45 lines the K(+) pocket. Positions 58 and 101 each coordinate L-methionine. A flexible loop region spans residues 101-111; the sequence is QSPDIAQGVTE. ATP-binding positions include 168–170, 234–235, aspartate 243, 249–250, alanine 266, and lysine 270; these read DSK, RF, and RK. Position 243 (aspartate 243) interacts with L-methionine. Position 274 (lysine 274) interacts with L-methionine.

Belongs to the AdoMet synthase family. As to quaternary structure, homotetramer; dimer of dimers. The cofactor is Mg(2+). It depends on K(+) as a cofactor.

The protein resides in the cytoplasm. It catalyses the reaction L-methionine + ATP + H2O = S-adenosyl-L-methionine + phosphate + diphosphate. Its pathway is amino-acid biosynthesis; S-adenosyl-L-methionine biosynthesis; S-adenosyl-L-methionine from L-methionine: step 1/1. In terms of biological role, catalyzes the formation of S-adenosylmethionine (AdoMet) from methionine and ATP. The overall synthetic reaction is composed of two sequential steps, AdoMet formation and the subsequent tripolyphosphate hydrolysis which occurs prior to release of AdoMet from the enzyme. This Geobacter sp. (strain M21) protein is S-adenosylmethionine synthase.